A 921-amino-acid polypeptide reads, in one-letter code: Phototropin-1B (921 aa).

Gly residues predominate over residues Met-1–Gly-11. 2 disordered regions span residues Met-1–Leu-59 and Thr-88–Ala-118. The segment covering Ser-40–Ala-51 has biased composition (low complexity). Residues Arg-97 to Ala-117 are compositionally biased toward polar residues. The 75-residue stretch at Val-123–Ser-197 folds into the PAS 1 domain. FMN is bound by residues Asn-172 to Gln-177, Arg-190, Asn-205, Asn-215, and Gln-236. S-4a-FMN cysteine is present on Cys-173. The region spanning Ser-197 to Val-251 is the PAC 1 domain. Polar residues predominate over residues Arg-286–Thr-295. 2 disordered regions span residues Arg-286–Arg-345 and Glu-366–Asp-391. 2 stretches are compositionally biased toward basic and acidic residues: residues Pro-312 to Ser-321 and Glu-366 to Asp-376. Residues Arg-400–Gln-473 form the PAS 2 domain. FMN contacts are provided by residues Asn-449–Gln-454, Arg-467, Asn-482, Asn-492, and Gln-513. Position 450 is an S-4a-FMN cysteine (Cys-450). The region spanning Ala-474 to Gly-528 is the PAC 2 domain. The region spanning Phe-594–Phe-881 is the Protein kinase domain. Residues Leu-600–Val-608 and Lys-623 each bind ATP. Asp-719 serves as the catalytic Proton acceptor.

It belongs to the protein kinase superfamily. Ser/Thr protein kinase family. In terms of assembly, homodimer. The cofactor is FMN. In terms of processing, autophosphorylated in response to blue light irradiation. Post-translationally, 2 molecules of FMN bind covalently to cysteines after exposure to blue light and are reversed in the dark.

It carries out the reaction L-seryl-[protein] + ATP = O-phospho-L-seryl-[protein] + ADP + H(+). The enzyme catalyses L-threonyl-[protein] + ATP = O-phospho-L-threonyl-[protein] + ADP + H(+). Protein kinase that acts as a blue light photoreceptor in a signal-transduction pathway for phototropic responses. Regulates a wide range of physiological activities in plants that maximize the efficiency of photosynthesis, such as chloroplast relocations, stomata opening, and leaf expansion. This chain is Phototropin-1B (PHOT1B), found in Oryza sativa subsp. japonica (Rice).